A 407-amino-acid chain; its full sequence is Phosphopentomutase (407 aa).

Mn(2+) is bound by residues aspartate 11, aspartate 305, histidine 310, aspartate 346, histidine 347, and histidine 358.

Belongs to the phosphopentomutase family. Mn(2+) serves as cofactor.

It localises to the cytoplasm. The catalysed reaction is 2-deoxy-alpha-D-ribose 1-phosphate = 2-deoxy-D-ribose 5-phosphate. It carries out the reaction alpha-D-ribose 1-phosphate = D-ribose 5-phosphate. It functions in the pathway carbohydrate degradation; 2-deoxy-D-ribose 1-phosphate degradation; D-glyceraldehyde 3-phosphate and acetaldehyde from 2-deoxy-alpha-D-ribose 1-phosphate: step 1/2. Functionally, isomerase that catalyzes the conversion of deoxy-ribose 1-phosphate (dRib-1-P) and ribose 1-phosphate (Rib-1-P) to deoxy-ribose 5-phosphate (dRib-5-P) and ribose 5-phosphate (Rib-5-P), respectively. This Legionella pneumophila (strain Paris) protein is Phosphopentomutase.